Consider the following 218-residue polypeptide: Probable transaldolase (218 aa).

Residue K87 is the Schiff-base intermediate with substrate of the active site.

It belongs to the transaldolase family. Type 3B subfamily.

Its subcellular location is the cytoplasm. It catalyses the reaction D-sedoheptulose 7-phosphate + D-glyceraldehyde 3-phosphate = D-erythrose 4-phosphate + beta-D-fructose 6-phosphate. The protein operates within carbohydrate degradation; pentose phosphate pathway; D-glyceraldehyde 3-phosphate and beta-D-fructose 6-phosphate from D-ribose 5-phosphate and D-xylulose 5-phosphate (non-oxidative stage): step 2/3. Transaldolase is important for the balance of metabolites in the pentose-phosphate pathway. This is Probable transaldolase from Bacteroides fragilis (strain ATCC 25285 / DSM 2151 / CCUG 4856 / JCM 11019 / LMG 10263 / NCTC 9343 / Onslow / VPI 2553 / EN-2).